The following is a 319-amino-acid chain: Annexin A4 (319 aa).

An N-acetylalanine modification is found at Ala2. At Thr7 the chain carries Phosphothreonine; by PKC. Residue Ser12 is modified to Phosphoserine. Annexin repeat units lie at residues 14–85, 86–157, 169–241, and 245–316; these read FNAA…GMMT, PTVL…SLSA, ALVR…AIVK, and NKSA…ILCG. N6-acetyllysine is present on residues Lys213, Lys293, and Lys300.

The protein belongs to the annexin family. In terms of assembly, monomer.

Its subcellular location is the zymogen granule membrane. Functionally, calcium/phospholipid-binding protein which promotes membrane fusion and is involved in exocytosis. The sequence is that of Annexin A4 (ANXA4) from Sus scrofa (Pig).